Consider the following 328-residue polypeptide: scyllo-inositol 2-dehydrogenase (NADP(+)) IolU (328 aa).

The protein belongs to the Gfo/Idh/MocA family.

It catalyses the reaction scyllo-inositol + NADP(+) = scyllo-inosose + NADPH + H(+). Its function is as follows. Catalyzes the NADPH-dependent reduction of scyllo-inosose (SIS) to scyllo-inositol (SI) in vitro, but is unable to dehydrogenate scyllo-inositol and myo-inositol. Is less efficient than the functional paralog IolW. Under physiological conditions, may primarily function as an NADPH-dependent oxidoreductase that reduces carbonyl group(s) in its substrates. Cannot use NADH instead of NADPH. The chain is scyllo-inositol 2-dehydrogenase (NADP(+)) IolU from Bacillus subtilis (strain 168).